The following is a 511-amino-acid chain: MVKQIMIQGTASDAGKSVLVAGLCRLFKNKGKRVVPFKSQNMSLNSFITATGDEMGRAQVFQAEAAGVFPDVRMNPVLLKPTNDRQSQVIFMGAILDNMDAVTYHDFKQTLIPKIQAVYQSLADENDIIVLEGAGSPAEINLNDRDIVNMGMAKMVDAPVVLVADIDKGGVFASIYGTIMLLNEEERARIKGVIINKFRGDVALLQPGIDMIEELTNVPVIGVIPYANLQLEEEDSVSLSGKNYVPDSNALLDIAIICLPRISNFTDFHILEIQPDISVRYIRNIADFGNPDLVIIPGSKNTLEDMAFLEESGLKNAIQNYAKNAGKVIGICGGYQMLGKKMLDPNQVESKQLEIAGLGLLDTETIFLDQKRTTQITGVTHSGEAVEGYEIHMGETKRGESTSPFCEIKAVNGNEETHQDGAISVNKNIIGTYIHGIFDNDVFLGNLFDELLTGKNKSVYPHEIINLKEHKEQEYDKLAALLEANIQMDQLEKIMKGEKICVSTQKPAIKE.

A GATase cobBQ-type domain is found at 251–443 (LLDIAIICLP…IHGIFDNDVF (193 aa)). The active-site Nucleophile is the Cys332. His435 is an active-site residue.

This sequence belongs to the CobB/CobQ family. CobQ subfamily.

Its pathway is cofactor biosynthesis; adenosylcobalamin biosynthesis. Functionally, catalyzes amidations at positions B, D, E, and G on adenosylcobyrinic A,C-diamide. NH(2) groups are provided by glutamine, and one molecule of ATP is hydrogenolyzed for each amidation. This chain is Cobyric acid synthase, found in Listeria monocytogenes serotype 4b (strain CLIP80459).